A 266-amino-acid polypeptide reads, in one-letter code: NAD-capped RNA hydrolase NudC (266 aa).

Arg-74 is a binding site for substrate. Zn(2+)-binding residues include Cys-103, Cys-106, Cys-121, and Cys-124. Tyr-129 is a substrate binding site. The 124-residue stretch at 130–253 folds into the Nudix hydrolase domain; that stretch reads PRVSPCIIVA…TIARVLIDET (124 aa). A divalent metal cation contacts are provided by Ala-163, Glu-179, and Glu-183. A Nudix box motif is present at residues 164-185; sequence GFVEAGETLEQCVAREVEEETG. Substrate is bound at residue 197–204; it reads QPWAFPSN. Position 224 (Glu-224) interacts with a divalent metal cation. A substrate-binding site is contributed by Ala-246.

It belongs to the Nudix hydrolase family. NudC subfamily. Homodimer. It depends on Mg(2+) as a cofactor. Mn(2+) serves as cofactor. Requires Zn(2+) as cofactor.

It catalyses the reaction a 5'-end NAD(+)-phospho-ribonucleoside in mRNA + H2O = a 5'-end phospho-adenosine-phospho-ribonucleoside in mRNA + beta-nicotinamide D-ribonucleotide + 2 H(+). It carries out the reaction NAD(+) + H2O = beta-nicotinamide D-ribonucleotide + AMP + 2 H(+). The enzyme catalyses NADH + H2O = reduced beta-nicotinamide D-ribonucleotide + AMP + 2 H(+). In terms of biological role, mRNA decapping enzyme that specifically removes the nicotinamide adenine dinucleotide (NAD) cap from a subset of mRNAs by hydrolyzing the diphosphate linkage to produce nicotinamide mononucleotide (NMN) and 5' monophosphate mRNA. The NAD-cap is present at the 5'-end of some mRNAs and stabilizes RNA against 5'-processing. Has preference for mRNAs with a 5'-end purine. Catalyzes the hydrolysis of a broad range of dinucleotide pyrophosphates. The sequence is that of NAD-capped RNA hydrolase NudC from Photobacterium profundum (strain SS9).